The following is a 506-amino-acid chain: Maturase K (506 aa).

It belongs to the intron maturase 2 family. MatK subfamily.

The protein localises to the plastid. It is found in the chloroplast. Usually encoded in the trnK tRNA gene intron. Probably assists in splicing its own and other chloroplast group II introns. The chain is Maturase K from Arabis alpina (Alpine rock-cress).